Here is a 336-residue protein sequence, read N- to C-terminus: MDAWAVQFGNASKVSPFEGEQYHIAPKWAFYLQAAFMGFVFIVGTPMNGIVLFVTMKYKKLRQPLNYILVNISLAGFIFDTFSVSQVFVCAARGYYFLGYTLCAMEAAMGSIAGLVTGWSLAVLAFERYVVICKPFGSFKFGQGQAVGAVVFTWIIGTACATPPFFGWSRYIPEGLGTACGPDWYTKSEEYNSESYTYFLLITCFMMPMTIIIFSYSQLLGALRAVAAQQAESESTQKAEREVSRMVVVMVGSFVLCYAPYAVTAMYFANSDEPNKDYRLVAIPAFFSKSSCVYNPLIYAFMNKQFNACIMETVFGKKIDESSEVSSKTETSSVSA.

At 1–29 the chain is on the extracellular side; it reads MDAWAVQFGNASKVSPFEGEQYHIAPKWA. N-linked (GlcNAc...) asparagine glycosylation is present at asparagine 10. A helical membrane pass occupies residues 30–54; that stretch reads FYLQAAFMGFVFIVGTPMNGIVLFV. Over 55 to 66 the chain is Cytoplasmic; it reads TMKYKKLRQPLN. Residues 67-91 traverse the membrane as a helical segment; that stretch reads YILVNISLAGFIFDTFSVSQVFVCA. The Extracellular segment spans residues 92-106; the sequence is ARGYYFLGYTLCAME. Cysteines 103 and 180 form a disulfide. The chain crosses the membrane as a helical span at residues 107–126; it reads AAMGSIAGLVTGWSLAVLAF. Residues 127–145 are Cytoplasmic-facing; that stretch reads ERYVVICKPFGSFKFGQGQ. Residues 146–169 traverse the membrane as a helical segment; sequence AVGAVVFTWIIGTACATPPFFGWS. At 170–195 the chain is on the extracellular side; that stretch reads RYIPEGLGTACGPDWYTKSEEYNSES. A helical transmembrane segment spans residues 196–223; sequence YTYFLLITCFMMPMTIIIFSYSQLLGAL. The Cytoplasmic segment spans residues 224-245; that stretch reads RAVAAQQAESESTQKAEREVSR. A helical membrane pass occupies residues 246 to 269; that stretch reads MVVVMVGSFVLCYAPYAVTAMYFA. The Extracellular segment spans residues 270 to 277; that stretch reads NSDEPNKD. A helical transmembrane segment spans residues 278-302; that stretch reads YRLVAIPAFFSKSSCVYNPLIYAFM. Lysine 289 is modified (N6-(retinylidene)lysine). Over 303–336 the chain is Cytoplasmic; the sequence is NKQFNACIMETVFGKKIDESSEVSSKTETSSVSA.

This sequence belongs to the G-protein coupled receptor 1 family. Opsin subfamily. Phosphorylated on some or all of the serine and threonine residues present in the C-terminal region. Retinal short single cones, outer and inner segments.

The protein localises to the membrane. Visual pigments are the light-absorbing molecules that mediate vision. They consist of an apoprotein, opsin, covalently linked to cis-retinal. This Danio rerio (Zebrafish) protein is Opsin-1, short-wave-sensitive 1 (opn1sw1).